The following is a 112-amino-acid chain: 2Fe-2S ferredoxin (112 aa).

The 2Fe-2S ferredoxin-type domain maps to 5 to 107 (IKVTFIVNDG…GIKVRLPSAT (103 aa)). The [2Fe-2S] cluster site is built by cysteine 42, cysteine 48, cysteine 51, and cysteine 88.

It belongs to the adrenodoxin/putidaredoxin family. It depends on [2Fe-2S] cluster as a cofactor.

Its function is as follows. Ferredoxin are iron-sulfur proteins that transfer electrons in a wide variety of metabolic reactions. This Rickettsia felis (strain ATCC VR-1525 / URRWXCal2) (Rickettsia azadi) protein is 2Fe-2S ferredoxin (fdxB).